Reading from the N-terminus, the 101-residue chain is Small ribosomal subunit protein uS14 (101 aa).

Belongs to the universal ribosomal protein uS14 family. In terms of assembly, part of the 30S ribosomal subunit. Contacts proteins S3 and S10.

Binds 16S rRNA, required for the assembly of 30S particles and may also be responsible for determining the conformation of the 16S rRNA at the A site. This Leptothrix cholodnii (strain ATCC 51168 / LMG 8142 / SP-6) (Leptothrix discophora (strain SP-6)) protein is Small ribosomal subunit protein uS14.